We begin with the raw amino-acid sequence, 416 residues long: Maltoporin (416 aa).

The signal sequence occupies residues 1–26 (MELTMKKVSVIAAAVAATLAAGSAFA).

It belongs to the porin LamB (TC 1.B.3) family. As to quaternary structure, homotrimer formed of three 18-stranded antiparallel beta-barrels, containing three independent channels.

It localises to the cell outer membrane. The catalysed reaction is beta-maltose(in) = beta-maltose(out). In terms of biological role, involved in the transport of maltose and maltodextrins. This is Maltoporin from Vibrio cholerae serotype O1 (strain ATCC 39541 / Classical Ogawa 395 / O395).